Reading from the N-terminus, the 460-residue chain is Elongation factor 1-alpha 3 (460 aa).

The 238-residue stretch at 6 to 243 (KTHINIVVIG…DCIIPPQRPT (238 aa)) folds into the tr-type G domain. Residues 15–22 (GHVDSGKS) are G1. The G2 stretch occupies residues 71-75 (GITID). The G3 stretch occupies residues 92 to 95 (DAPG). The interval 154 to 157 (NKMD) is G4. The interval 195 to 197 (SGF) is G5. 5-glutamyl glycerylphosphorylethanolamine occurs at positions 302 and 375.

It belongs to the TRAFAC class translation factor GTPase superfamily. Classic translation factor GTPase family. EF-Tu/EF-1A subfamily.

The protein localises to the cytoplasm. In terms of biological role, this protein promotes the GTP-dependent binding of aminoacyl-tRNA to the A-site of ribosomes during protein biosynthesis. This is Elongation factor 1-alpha 3 (eft-3) from Oscheius tipulae.